Here is a 257-residue protein sequence, read N- to C-terminus: Auxin-responsive protein IAA17 (257 aa).

Disordered regions lie at residues 1–51 and 85–119; these read MSPP…PAAT and GKKAAAGEEDEDAEEEDKKVAAAPQAPAAKAQVVG. The short motif at 33 to 37 is the EAR-like (transcriptional repression) element; that stretch reads LRLGL. Over residues 105-118 the composition is skewed to low complexity; the sequence is AAAPQAPAAKAQVV. The region spanning 151 to 239 is the PB1 domain; sequence FLYVKVSMDG…SCRRLRIMKG (89 aa).

It belongs to the Aux/IAA family. As to quaternary structure, homodimers and heterodimers. Highly expressed in etiolated seedlings and flowers. Expressed in roots and green seedlings.

The protein localises to the nucleus. Its function is as follows. Aux/IAA proteins are short-lived transcriptional factors that function as repressors of early auxin response genes at low auxin concentrations. This Oryza sativa subsp. japonica (Rice) protein is Auxin-responsive protein IAA17 (IAA17).